Consider the following 207-residue polypeptide: Protein FAM177A1 (207 aa).

Met-1 bears the N-acetylmethionine mark. Ser-65 is modified (phosphoserine). Thr-66 bears the Phosphothreonine mark. A coiled-coil region spans residues Ile-131–Gln-170. The interval Glu-142 to Thr-176 is disordered. Positions Gln-157 to Thr-176 are enriched in polar residues.

This sequence belongs to the FAM177 family.

In Mus musculus (Mouse), this protein is Protein FAM177A1 (Fam177a1).